Here is a 182-residue protein sequence, read N- to C-terminus: Kappa-casein (182 aa).

A signal peptide spans 1–20; sequence MKSFLLVVNALALTLPFLAV. 4 O-linked (GalNAc...) threonine glycosylation sites follow: T133, T143, T148, and T151. T157 carries the post-translational modification Phosphothreonine; alternate. T157 carries O-linked (GalNAc...) threonine; alternate glycosylation. 3 O-linked (GalNAc...) threonine glycosylation sites follow: T167, T169, and T178.

It belongs to the kappa-casein family. In terms of assembly, heteromultimers composed of alpha-s1 casein and kappa casein linked by disulfide bonds. Post-translationally, the N-terminus is blocked. In terms of tissue distribution, mammary gland specific. Secreted in milk.

It localises to the secreted. In terms of biological role, kappa-casein stabilizes micelle formation, preventing casein precipitation in milk. The polypeptide is Kappa-casein (CSN3) (Homo sapiens (Human)).